We begin with the raw amino-acid sequence, 120 residues long: Ribonuclease P protein component 2 (120 aa).

The protein belongs to the eukaryotic/archaeal RNase P protein component 2 family. In terms of assembly, consists of a catalytic RNA component and at least 4-5 protein subunits.

It localises to the cytoplasm. The enzyme catalyses Endonucleolytic cleavage of RNA, removing 5'-extranucleotides from tRNA precursor.. Functionally, part of ribonuclease P, a protein complex that generates mature tRNA molecules by cleaving their 5'-ends. This is Ribonuclease P protein component 2 from Methanobrevibacter smithii (strain ATCC 35061 / DSM 861 / OCM 144 / PS).